The following is a 269-amino-acid chain: Subtilisin Savinase (269 aa).

Gln-2 contacts Ca(2+). The Peptidase S8 domain maps to 5–268 (PWGISRVQAP…SGLVNAEAAT (264 aa)). Asp-32 functions as the Charge relay system in the catalytic mechanism. Position 40 (Asp-40) interacts with Ca(2+). His-62 functions as the Charge relay system in the catalytic mechanism. Leu-73, Asn-75, Ile-77, Val-79, Ala-163, Tyr-165, and Ala-168 together coordinate Ca(2+). Ser-215 serves as the catalytic Charge relay system.

It belongs to the peptidase S8 family. It depends on Ca(2+) as a cofactor.

It is found in the secreted. The catalysed reaction is Hydrolysis of proteins with broad specificity for peptide bonds, and a preference for a large uncharged residue in P1. Hydrolyzes peptide amides.. Its function is as follows. Subtilisin is an extracellular alkaline serine protease, it catalyzes the hydrolysis of proteins and peptide amides. This Lederbergia lenta (Bacillus lentus) protein is Subtilisin Savinase.